The following is a 114-amino-acid chain: NADH-ubiquinone oxidoreductase chain 3 (114 aa).

3 consecutive transmembrane segments (helical) span residues 4–24 (LVYI…SYLL), 55–75 (FYLI…ILPF), and 82–102 (VSLL…IGFI).

This sequence belongs to the complex I subunit 3 family.

The protein resides in the mitochondrion membrane. It catalyses the reaction a ubiquinone + NADH + 5 H(+)(in) = a ubiquinol + NAD(+) + 4 H(+)(out). In terms of biological role, core subunit of the mitochondrial membrane respiratory chain NADH dehydrogenase (Complex I) that is believed to belong to the minimal assembly required for catalysis. Complex I functions in the transfer of electrons from NADH to the respiratory chain. The immediate electron acceptor for the enzyme is believed to be ubiquinone. This chain is NADH-ubiquinone oxidoreductase chain 3 (ND3), found in Allomyces macrogynus.